A 186-amino-acid chain; its full sequence is Peptidyl-tRNA hydrolase (186 aa).

Residue Tyr-15 participates in tRNA binding. The active-site Proton acceptor is His-20. Tyr-64, Asn-66, and Asn-112 together coordinate tRNA.

It belongs to the PTH family. Monomer.

Its subcellular location is the cytoplasm. It carries out the reaction an N-acyl-L-alpha-aminoacyl-tRNA + H2O = an N-acyl-L-amino acid + a tRNA + H(+). Functionally, hydrolyzes ribosome-free peptidyl-tRNAs (with 1 or more amino acids incorporated), which drop off the ribosome during protein synthesis, or as a result of ribosome stalling. Catalyzes the release of premature peptidyl moieties from peptidyl-tRNA molecules trapped in stalled 50S ribosomal subunits, and thus maintains levels of free tRNAs and 50S ribosomes. This is Peptidyl-tRNA hydrolase from Azobacteroides pseudotrichonymphae genomovar. CFP2.